The primary structure comprises 155 residues: Conopressin/neurophysin (155 aa).

The N-terminal stretch at 1 to 26 (MMSSLCGMPLTYLLTAAVLSLSLTDA) is a signal peptide. Cysteines 27 and 32 form a disulfide. G35 bears the Glycine amide mark. Intrachain disulfides connect C50-C94, C53-C67, C61-C84, C68-C74, C101-C115, C109-C127, and C116-C121. N88 carries an N-linked (GlcNAc...) asparagine glycan.

It belongs to the vasopressin/oxytocin family. In terms of processing, seven disulfide bonds are present in neurophysin.

It localises to the secreted. The polypeptide is Conopressin/neurophysin (Lymnaea stagnalis (Great pond snail)).